Consider the following 374-residue polypeptide: Regulator of G-protein signaling 20 (374 aa).

Over residues 1–11 the composition is skewed to polar residues; sequence MPRLSQDNQQG. Disordered regions lie at residues 1–21 and 135–158; these read MPRL…RPSR and PPGG…PPMG. Residues 12 to 21 are compositionally biased toward basic residues; it reads HQKHFSRPSR. Positions 248–364 constitute an RGS domain; it reads SFDKLMLTPA…MNSALYKDLL (117 aa).

As to quaternary structure, forms a complex with G(alpha)z/i2 subunits and mu-opioid receptors; the formation of this complex results in mu-opioid receptor desensitization. Interacts with OPRM1. In terms of processing, fatty acylated. Heavily palmitoylated in the cysteine string motif. N- and O-glycosylated in synapsomal membranes. Post-translationally, serine phosphorylated in synapsomal membranes. In terms of processing, sumoylated with SUMO1 and SUMO2 in synaptosomes. The sumoylated forms act as a scaffold for sequestering mu-opioid receptor-activated G(alpha) subunits. Retinal-specific. Expressed throughout the retina, including photoreceptors.

It localises to the membrane. It is found in the nucleus. The protein localises to the cytoplasm. Inhibits signal transduction by increasing the GTPase activity of G protein alpha subunits thereby driving them into their inactive GDP-bound form. Binds selectively to G(z)-alpha and G(alpha)-i2 subunits, accelerates their GTPase activity and regulates their signaling activities. The G(z)-alpha activity is inhibited by the phosphorylation and palmitoylation of the G-protein. Negatively regulates mu-opioid receptor-mediated activation of the G-proteins. The polypeptide is Regulator of G-protein signaling 20 (RGS20) (Bos taurus (Bovine)).